Consider the following 191-residue polypeptide: Prostaglandin-H2 D-isomerase (191 aa).

Residues 1–24 (MGALCTLWLGLVLLGVLGALQTSA) form the signal peptide. Residue Q25 is modified to Pyrrolidone carboxylic acid. The N-linked (GlcNAc...) asparagine glycan is linked to N51. The Nucleophile role is filled by C65. N78 is a glycosylation site (N-linked (GlcNAc...) asparagine). C89 and C186 are joined by a disulfide.

It belongs to the calycin superfamily. Lipocalin family. In terms of assembly, monomer. N- and O-glycosylated. Both N-glycosylation recognition sites are almost quantitatively occupied by N-glycans of the biantennary complex type, with a considerable proportion of structures bearing a bisecting GlcNAc. N-glycan at Asn-78: dHex1Hex5HexNAc4. Agalacto structure as well as sialylated and nonsialylated oligosaccharides bearing alpha2-3- and/or alpha2-6-linked NeuNAc are present.

It is found in the rough endoplasmic reticulum. The protein resides in the nucleus membrane. Its subcellular location is the golgi apparatus. It localises to the cytoplasm. The protein localises to the perinuclear region. It is found in the secreted. It carries out the reaction prostaglandin H2 = prostaglandin D2. Functionally, catalyzes the conversion of PGH2 to PGD2, a prostaglandin involved in smooth muscle contraction/relaxation and a potent inhibitor of platelet aggregation. Involved in a variety of CNS functions, such as sedation, NREM sleep and PGE2-induced allodynia, and may have an anti-apoptotic role in oligodendrocytes. Binds small non-substrate lipophilic molecules, including biliverdin, bilirubin, retinal, retinoic acid and thyroid hormone, and may act as a scavenger for harmful hydrophobic molecules and as a secretory retinoid and thyroid hormone transporter. Possibly involved in development and maintenance of the blood-brain, blood-retina, blood-aqueous humor and blood-testis barrier. It is likely to play important roles in both maturation and maintenance of the central nervous system and male reproductive system. Involved in PLA2G3-dependent maturation of mast cells. PLA2G3 is secreted by immature mast cells and acts on nearby fibroblasts upstream to PTDGS to synthesize PGD2, which in turn promotes mast cell maturation and degranulation via PTGDR. The protein is Prostaglandin-H2 D-isomerase (PTGDS) of Canis lupus familiaris (Dog).